The primary structure comprises 69 residues: Beta-defensin 11 (69 aa).

The N-terminal stretch at 1 to 23 (MRTLCSLLLIGCLLFSYDTPVVG) is a signal peptide. Cystine bridges form between cysteine 35/cysteine 64, cysteine 42/cysteine 57, and cysteine 47/cysteine 65.

It belongs to the beta-defensin family.

It localises to the secreted. In terms of biological role, has antibacterial activity. This chain is Beta-defensin 11 (Defb11), found in Rattus norvegicus (Rat).